A 571-amino-acid polypeptide reads, in one-letter code: Chitin-inducible gibberellin-responsive protein 1 (571 aa).

Positions 61–77 are enriched in polar residues; the sequence is TNTPDNQSSTETISAQP. Disordered regions lie at residues 61–80 and 151–180; these read TNTP…PISP and QRSR…YPTA. A GRAS domain is found at 192–571; sequence ELREDPQIIV…RKLISASAWH (380 aa). The segment at 199 to 259 is leucine repeat I (LRI); it reads IIVKQLLTRC…VARHGNSGTN (61 aa). Residues 278–343 form a VHIID region; it reads MRILYNICPY…GGPPRVRITG (66 aa). Residues 309-313 carry the VHIID motif; that stretch reads IHIID. The interval 359 to 391 is leucine repeat II (LRII); sequence IVGKMLKSMSEEFKIPLEFTPLSVYATQVTKEM. Residues 400 to 494 are PFYRE; that stretch reads LSVNFTLQLH…QHCLAKDIVN (95 aa). The SAW stretch occupies residues 497-571; that stretch reads ACEGKDRVER…RKLISASAWH (75 aa).

This sequence belongs to the GRAS family.

It localises to the nucleus. Its function is as follows. May play a regulatory role in the early step of oligosaccharide elicitor response, downstream of the membrane-associated high-affinity chitin-binding protein. The protein is Chitin-inducible gibberellin-responsive protein 1 (CIGR1) of Oryza sativa subsp. japonica (Rice).